The primary structure comprises 45 residues: Large ribosomal subunit protein bL36 (45 aa).

Residues 26-45 (VINKKDPNRKQRQKGPARKK) are disordered. Residues 35–45 (KQRQKGPARKK) show a composition bias toward basic residues.

The protein belongs to the bacterial ribosomal protein bL36 family.

This Protochlamydia amoebophila (strain UWE25) protein is Large ribosomal subunit protein bL36.